The sequence spans 205 residues: ATP phosphoribosyltransferase (205 aa).

It belongs to the ATP phosphoribosyltransferase family. Short subfamily. As to quaternary structure, heteromultimer composed of HisG and HisZ subunits.

The protein localises to the cytoplasm. The catalysed reaction is 1-(5-phospho-beta-D-ribosyl)-ATP + diphosphate = 5-phospho-alpha-D-ribose 1-diphosphate + ATP. The protein operates within amino-acid biosynthesis; L-histidine biosynthesis; L-histidine from 5-phospho-alpha-D-ribose 1-diphosphate: step 1/9. Functionally, catalyzes the condensation of ATP and 5-phosphoribose 1-diphosphate to form N'-(5'-phosphoribosyl)-ATP (PR-ATP). Has a crucial role in the pathway because the rate of histidine biosynthesis seems to be controlled primarily by regulation of HisG enzymatic activity. The sequence is that of ATP phosphoribosyltransferase from Helicobacter hepaticus (strain ATCC 51449 / 3B1).